The sequence spans 592 residues: MTVLKPSHWRVLAELADGLPQHVSQLAREADMKPQQLNGFWQQMPAHIRGLLRQHDGYWRLVRPLAVFDAEGLRDLGERSGFQTALKHECASSNDEILELARIAPDKAHKTICVTHLQSKGRGRQGRKWSHRLGECLMFSFGWAFDRPQYELGSLSPVAALACRRALGCLGLETQIKWPNDLVVGRDKLGGILIETVRAGGKTVAVVGIGINFVLPKEVENAASVQSLFQTASRRGNADAAVLLETLLAELGAVLEQYAEEGFAPFLNEYETANRDHGKAVLLLRDGETVCEGTVKGVDGRGVLHLETAEGEQTVVSGEISLRPDNRSVSVPKRPDSERFLLLEGGNSRLKWAWVENGTFATVGSAPYRDLSPLGAEWAEKADGNVRIVGCAVCGESKKAQVKEQLARKIEWLPSSAQALGIRNHYRHPEEHGSDRWFNALGSRRFSRNACVVVSCGTAVTVDALTDDGHYLGGTIMPGFHLMKESLAVRTANLNRPAGKRYPFPTTTGNAVASGMMDAVCGSIMMMHGRLKEKNGAGKPVDVIITGGGAAKVAEALPPAFLAENTVRVADNLVIHGLLNLIAAEGGESEHA.

A biotin--protein ligase region spans residues 1-329 (MTVLKPSHWR…ISLRPDNRSV (329 aa)). Positions 83–259 (QTALKHECAS…ELGAVLEQYA (177 aa)) constitute a BPL/LPL catalytic domain. The tract at residues 336–592 (DSERFLLLEG…AAEGGESEHA (257 aa)) is type III pantothenate kinase. 344 to 351 (EGGNSRLK) contacts ATP. Residues Y426 and 433–436 (GSDR) contribute to the substrate site. D435 acts as the Proton acceptor in catalysis. T458 is a binding site for ATP. Residue T508 coordinates substrate.

The protein in the N-terminal section; belongs to the biotin--protein ligase family. In the C-terminal section; belongs to the type III pantothenate kinase family. The cofactor is NH4(+). It depends on K(+) as a cofactor.

It is found in the cytoplasm. It carries out the reaction biotin + L-lysyl-[protein] + ATP = N(6)-biotinyl-L-lysyl-[protein] + AMP + diphosphate + H(+). It catalyses the reaction (R)-pantothenate + ATP = (R)-4'-phosphopantothenate + ADP + H(+). Its pathway is cofactor biosynthesis; coenzyme A biosynthesis; CoA from (R)-pantothenate: step 1/5. Its function is as follows. Activates biotin to form biotinyl-5'-adenylate and transfers the biotin moiety to biotin-accepting proteins. Catalyzes the phosphorylation of pantothenate (Pan), the first step in CoA biosynthesis. The sequence is that of Bifunctional enzyme BirA/CoaX (birA/coaX) from Neisseria gonorrhoeae (strain ATCC 700825 / FA 1090).